The chain runs to 344 residues: S-adenosylmethionine:tRNA ribosyltransferase-isomerase (344 aa).

This sequence belongs to the QueA family. In terms of assembly, monomer.

Its subcellular location is the cytoplasm. The enzyme catalyses 7-aminomethyl-7-carbaguanosine(34) in tRNA + S-adenosyl-L-methionine = epoxyqueuosine(34) in tRNA + adenine + L-methionine + 2 H(+). It participates in tRNA modification; tRNA-queuosine biosynthesis. Its function is as follows. Transfers and isomerizes the ribose moiety from AdoMet to the 7-aminomethyl group of 7-deazaguanine (preQ1-tRNA) to give epoxyqueuosine (oQ-tRNA). The polypeptide is S-adenosylmethionine:tRNA ribosyltransferase-isomerase (Nitrosococcus oceani (strain ATCC 19707 / BCRC 17464 / JCM 30415 / NCIMB 11848 / C-107)).